We begin with the raw amino-acid sequence, 472 residues long: Glutamate--tRNA ligase (472 aa).

The 'HIGH' region signature appears at 18 to 28 (PSPTGYLHIGG). Basic and acidic residues predominate over residues 122–138 (RARGEKPRYDGRWRPEP). Residues 122 to 150 (RARGEKPRYDGRWRPEPGKTLPVPPSGVQ) form a disordered region. The short motif at 250-254 (KLSKR) is the 'KMSKS' region element. ATP is bound at residue Lys-253.

The protein belongs to the class-I aminoacyl-tRNA synthetase family. Glutamate--tRNA ligase type 1 subfamily. Monomer.

It localises to the cytoplasm. It carries out the reaction tRNA(Glu) + L-glutamate + ATP = L-glutamyl-tRNA(Glu) + AMP + diphosphate. In terms of biological role, catalyzes the attachment of glutamate to tRNA(Glu) in a two-step reaction: glutamate is first activated by ATP to form Glu-AMP and then transferred to the acceptor end of tRNA(Glu). The polypeptide is Glutamate--tRNA ligase (Thiobacillus denitrificans (strain ATCC 25259 / T1)).